We begin with the raw amino-acid sequence, 144 residues long: Large ribosomal subunit protein uL13 (144 aa).

Belongs to the universal ribosomal protein uL13 family. In terms of assembly, part of the 50S ribosomal subunit.

In terms of biological role, this protein is one of the early assembly proteins of the 50S ribosomal subunit, although it is not seen to bind rRNA by itself. It is important during the early stages of 50S assembly. In Mycoplasmopsis synoviae (strain 53) (Mycoplasma synoviae), this protein is Large ribosomal subunit protein uL13.